Consider the following 398-residue polypeptide: MVTMEELREMDCSVLKRLMNRDENGGGGSAGGNGSGSHGALGLLSGGKCLLLDCRPFLAHSAGYIRGSVNVRCNTIVRRRAKGSVSLEQILPAEEEVRARLRSGLYSAVIVYDERSPRAESLREDSTVSLVVQALRRNAERTDICLLKGGYERFSSEYPEFCSKTKALAAIPPPVPPSTNESLDLGCSSCGTPLHDQGGPVEILPFLYLGSAYHAARRDMLDALGITALLNVSSDCPNHFEGHYQYKCIPVEDNHKADISSWFMEAIEYIDAVKDCRGRVLVHCQAGISRSATICLAYLMMKKRVRLEEAFEFVKQRRSIISPNFSFMGQLLQFESQVLTTSCAAEAASPSGPLRERGKATPTPTSQFVFSFPVSVGVHAAPSNLPYLHSPITTSPSC.

V2 carries the post-translational modification N-acetylvaline. The Rhodanese domain maps to 45–163; that stretch reads SGGKCLLLDC…FSSEYPEFCS (119 aa). The region spanning 199-340 is the Tyrosine-protein phosphatase domain; sequence GPVEILPFLY…LLQFESQVLT (142 aa). C284 acts as the Phosphocysteine intermediate in catalysis. 2 positions are modified to phosphoserine; by MAPK: S390 and S395.

This sequence belongs to the protein-tyrosine phosphatase family. Non-receptor class dual specificity subfamily. In terms of assembly, hollow spherical complex composed of 24 subunits with pseudooctahedral symmetry, has a tetramer as the basic unit. Phosphorylation in the C-terminus by ERK1/2 inhibits proteasomal degradation and stabilizes the protein.

The protein localises to the nucleus. It catalyses the reaction O-phospho-L-tyrosyl-[protein] + H2O = L-tyrosyl-[protein] + phosphate. The enzyme catalyses O-phospho-L-seryl-[protein] + H2O = L-seryl-[protein] + phosphate. It carries out the reaction O-phospho-L-threonyl-[protein] + H2O = L-threonyl-[protein] + phosphate. Its function is as follows. Regulates mitogenic signal transduction by dephosphorylating both Thr and Tyr residues on MAP kinases ERK1 and ERK2. This Mus musculus (Mouse) protein is Dual specificity protein phosphatase 4 (Dusp4).